The sequence spans 541 residues: Serine/threonine-protein kinase akt-1 (541 aa).

The 104-residue stretch at 15 to 118 folds into the PH domain; that stretch reads DVVIEGWLHK…WIHAIESISK (104 aa). Positions 193 to 450 constitute a Protein kinase domain; that stretch reads FDFLKVLGKG…ALEICRADFF (258 aa). Residues 199–207 and lysine 222 each bind ATP; that span reads LGKGTFGKV. Aspartate 316 serves as the catalytic Proton acceptor. Phosphothreonine is present on threonine 350. Positions 451–528 constitute an AGC-kinase C-terminal domain; that stretch reads RTVDWEATYR…HNVMGSINRI (78 aa). Serine 517 carries the phosphoserine modification.

It belongs to the protein kinase superfamily. AGC Ser/Thr protein kinase family. RAC subfamily. Interacts with pdk-1, sgk-1, akt-2 and daf-16. Part of a complex containing sgk-1, akt-1 and akt-2. Interacts with cmd-1 in the presence of Ca(2+). Interacts with let-92 phosphatase regulatory subunit pptr-1. Mg(2+) is required as a cofactor. Expressed in neurons, muscle cells of the pharynx, rectal gland cells, vulva and spermatheca.

The enzyme catalyses L-seryl-[protein] + ATP = O-phospho-L-seryl-[protein] + ADP + H(+). It catalyses the reaction L-threonyl-[protein] + ATP = O-phospho-L-threonyl-[protein] + ADP + H(+). With respect to regulation, phosphorylated and activated by pdk-1. In terms of biological role, acts downstream of PI3 kinase age-1 and kinase pdk-1 in the daf-2/insulin receptor-like transduction pathway. Phosphorylates Forkhead-related daf-16 and the longevity-promoting skn-1 transcription factors, which inhibits their entry into the nucleus and antagonizes their functions. Plays a role in maintaining the gonadal basement membrane through it's role in inhibiting daf-16 activity. Has an essential role in regulating developmental arrest at the dauer stage. Plays a role in immune function and pathogen resistance. Regulates salt chemotaxis learning. Downstream of age-1 and together with akt-2 and sgk-1, promotes cell survival during embryonic development. The protein is Serine/threonine-protein kinase akt-1 of Caenorhabditis elegans.